The following is a 229-amino-acid chain: ATP-dependent dethiobiotin synthetase BioD (229 aa).

12–17 is an ATP binding site; sequence GAGKTI. Mg(2+) is bound at residue Thr16. Residue Lys38 is part of the active site. Residues Asp46, 105-108, and 165-166 each bind ATP; these read EGVG and SE. 2 residues coordinate Mg(2+): Asp46 and Glu105.

This sequence belongs to the dethiobiotin synthetase family. As to quaternary structure, homodimer. The cofactor is Mg(2+).

It localises to the cytoplasm. It catalyses the reaction (7R,8S)-7,8-diammoniononanoate + CO2 + ATP = (4R,5S)-dethiobiotin + ADP + phosphate + 3 H(+). The enzyme catalyses (7R,8S)-8-amino-7-(carboxyamino)nonanoate + ATP = (4R,5S)-dethiobiotin + ADP + phosphate + H(+). The protein operates within cofactor biosynthesis; biotin biosynthesis; biotin from 7,8-diaminononanoate: step 1/2. Its function is as follows. Catalyzes a mechanistically unusual reaction, the ATP-dependent insertion of CO2 between the N7 and N8 nitrogen atoms of 7,8-diaminopelargonic acid (DAPA, also called 7,8-diammoniononanoate) to form a ureido ring. This cyanobacterium does not encode bioA (which catalyzes the formation of the precursor for this reaction in the cannonical pathway), instead it encodes bioU, which replaces bioA and also performs the first half of the cannonical BioD reaction. Thus in this organism BioD has a different substrate. This is ATP-dependent dethiobiotin synthetase BioD from Gloeobacter violaceus (strain ATCC 29082 / PCC 7421).